The primary structure comprises 1491 residues: MGDTAKPYFVKRTKDRGIIDDDDFRRGHPQQDYLIMDDYAKGHSSKMEKGLPKKKISPGNYGNTPRKGLYGVSSNPYAFKNPIYSQPAWMNDNHKDQNKKWLSDELAGNADSWREFKPGPRIPVISRSRKESFQESDDAYRWQEGRGCRAVRRLFQKDLSSLEAMSEMEAGSPENKKQRSRPRKPRRTRTEDSEQDGDLDGPVIDESVLSTKELLGLQQAEERLKRDCIDRLKRRPRNCPTAKYTCKLCDALIDSIPFAHKHIKEKRHKKNLKEKQEEELLTTLPPPAPSQIHAVGSAIDRVVQEFGLHSENLDQRLEIKRVMESVFRHKLPDCSLRLYGSSCSRLGFRDSDVNIDVQFPAVMSQPDVLLLVQECLKNSDSFIDVDADFHARVPVVVCRDKQSGLLCKVSAGNENAWLTTKHLTALGKLEPRLVPLVIAFRYWAKLCSIDRPEEGGLPPYVFALMAVFFLQQRKEPLLPVYLGSWIEEFSLNKLGNFSLKDVEKDSVVWEYTDNSTGDTSSAKEEAPKETAAKKGQVPLTFNIKHQPSVPVGQLWVELLRFYALEFNLADLVISIRVKELISRESKDWPKKRIAIEDPYSVKRNVARTLNNQPVFEYILHCLRTTYKYFALPHKVTKPNLTKPPSPVTCVSDPYREAKNGGPEPQATNIDKLGNAAVAQDPGVQTSGDCRAQLVTLKNTTEEVGSPAKEKTGGVHIPAHQESSGCVQAEVSCEGLEDATAELPETGSDNEEVRRKTKHPLSTDDQGLSSSKHPELQNCGSLCGLQADNTLELVAEECNSCASLDNKAEVNEERIEGAEELEEAAALSCFSPSVQSRTSAAMHFDDEEEEEEEEEEEEPRLSINLTEDEEGVANEHQVDSRYAGSGEEDALSEEDDLAEPAKGEDTGECGENVGGTLLIDLNRITLKEESFPEEDLPGDQSEFFYEFRKLTFTKGKSPTVVCSLCKREGHLKKDCPEDFKRVQLEPLPPLTPKFSNILDQVCVQCYKDFSPTIVEDQAREHIRQNLESFIKQDFPGTKLSLFGSSKNGFGFKQSDLDVCMTINGHETAEGLDCVRTIEELARVLRKHSGLRNILPITTAKVPIVKFFHLRSGLEVDISLYNTLALHNTRLLSAYSAIDPRVKYLCYTMKVFTKMCDIGDASRGSLSSYAYTLMVLYFLQQRSPPVIPVLQEIYKGEKKPEILVDGWNIYFFDQINELPTCWPEYGKNTEPVGQLWLGLLRFYTEEFDFKEHVISIRRKSLLTTFKKQWTSKYIVIEDPFDLNHNLGAGLSRKMTNFIMKAFINGRRVFGIPVKGFPKDNPSKLAYFFDPDVLTEGELAPNDRCCRICGKIGHFMKDCPMRRKVRRRRDQEDTPNQRYSESKEKRSKEDKEIQNKYTEKEVSTKEDKLTPCAAAKAKPVRAAVDLGREKLLRTPTEKWKRQDDRDSREKRCFICGREGHIKKECPQFKGSPGSLSSKYMTQGRASVKRTQQES.

Thr64 is subject to Phosphothreonine. Phosphoserine occurs at positions 132 and 172. The disordered stretch occupies residues 165 to 203; that stretch reads MSEMEAGSPENKKQRSRPRKPRRTRTEDSEQDGDLDGPV. Over residues 178 to 187 the composition is skewed to basic residues; the sequence is QRSRPRKPRR. The Matrin-type zinc-finger motif lies at 244-274; the sequence is YTCKLCDALIDSIPFAHKHIKEKRHKKNLKE. The PAP-associated 1 domain maps to 551–600; the sequence is VGQLWVELLRFYALEFNLADLVISIRVKELISRESKDWPKKRIAIEDPYS. Phosphoserine occurs at positions 600 and 747. 2 disordered regions span residues 740-774 and 834-911; these read AELP…KHPE and QSRT…CGEN. Residues 844 to 857 are compositionally biased toward acidic residues; the sequence is DDEEEEEEEEEEEE. Thr865 is subject to Phosphothreonine. The segment covering 885-897 has biased composition (acidic residues); that stretch reads GEEDALSEEDDLA. Ser891 is subject to Phosphoserine. A sufficient for monouridylation activity region spans residues 947-1491; that stretch reads RKLTFTKGKS…ASVKRTQQES (545 aa). Residues 959–976 form a CCHC-type 1 zinc finger; sequence VVCSLCKREGHLKKDCPE. UTP is bound by residues 1043-1046, 1053-1056, Asn1126, Lys1148, 1166-1170, and His1282; these read SSKN, SDLD, and SYAYT. Mg(2+)-binding residues include Asp1054 and Asp1056. One can recognise a PAP-associated 2 domain in the interval 1230 to 1282; it reads VGQLWLGLLRFYTEEFDFKEHVISIRRKSLLTTFKKQWTSKYIVIEDPFDLNH. A CCHC-type 2 zinc finger spans residues 1341-1358; it reads RCCRICGKIGHFMKDCPM. Disordered regions lie at residues 1362–1399 and 1463–1491; these read VRRR…EKEV and PQFK…QQES. Residues 1377 to 1399 are compositionally biased toward basic and acidic residues; sequence SESKEKRSKEDKEIQNKYTEKEV. The CCHC-type 3 zinc-finger motif lies at 1447–1464; that stretch reads KRCFICGREGHIKKECPQ. Residues 1470–1481 are compositionally biased toward polar residues; it reads GSLSSKYMTQGR.

It belongs to the DNA polymerase type-B-like family. The cofactor is Mg(2+). Mn(2+) is required as a cofactor.

It localises to the cytoplasm. The enzyme catalyses RNA(n) + UTP = RNA(n)-3'-uridine ribonucleotide + diphosphate. Functionally, uridylyltransferase that mediates the terminal uridylation of mRNAs with short (less than 25 nucleotides) poly(A) tails, hence facilitating global mRNA decay. Essential for both oocyte maturation and fertility. Through 3' terminal uridylation of mRNA, sculpts, with TUT7, the maternal transcriptome by eliminating transcripts during oocyte growth. Involved in microRNA (miRNA)-induced gene silencing through uridylation of deadenylated miRNA targets. Also acts as a suppressor of miRNA biogenesis by mediating the terminal uridylation of miRNA precursors, including that of let-7 (pre-let-7). Uridylated pre-let-7 RNA is not processed by Dicer and undergo degradation. Pre-let-7 uridylation is strongly enhanced in the presence of LIN28A. Due to functional redundancy between ZCCHC6 and ZCCHC11, the identification of the specific role of each of these proteins is difficult. Involved in microRNA (miRNA)-induced gene silencing through uridylation of deadenylated miRNA targets. Also functions as an integral regulator of microRNA biogenesiS using 3 different uridylation mechanisms. Acts as a suppressor of miRNA biogenesis by mediating the terminal uridylation of some miRNA precursors, including that of let-7 (pre-let-7). Uridylated pre-let-7 RNA is not processed by Dicer and undergo degradation. Pre-let-7 oligouridylation is strongly enhanced in the presence of LIN28A. In the absence of LIN28A, TUT7 and TUT4 monouridylate group II pre-miRNAs, which includes most of pre-let7 members, that shapes an optimal 3' end overhang for efficient processing. Add oligo-U tails to truncated pre-miRNAS with a 5' overhang which may promote rapid degradation of non-functional pre-miRNA species. Does not play a role in replication-dependent histone mRNA degradation. Due to functional redundancy between TUT4 and TUT7, the identification of the specific role of each of these proteins is difficult. TUT4 and TUT7 restrict retrotransposition of long interspersed element-1 (LINE-1) in cooperation with MOV10 counteracting the RNA chaperonne activity of L1RE1. TUT7 uridylates LINE-1 mRNAs in the cytoplasm which inhibits initiation of reverse transcription once in the nucleus, whereas uridylation by TUT4 destabilizes mRNAs in cytoplasmic ribonucleoprotein granules. The chain is Terminal uridylyltransferase 7 from Mus musculus (Mouse).